A 600-amino-acid polypeptide reads, in one-letter code: MTQTQPVTPTPPASFQTQHDPRTRLGATPLPGGAGTRFRLWTSTARTVAVRVNGTEHVMTSLGGGIYELELPVGPGARYLFVLDGVPTPDPYARFLPDGVHGEAEVVDFGTFDWTDADWHGIKLADCVFYEVHVGTFTPEGTYRAAAEKLPYLKELGVTAIQVMPLAAFDGQRGWGYDGAAFYAPYAPYGRPEDLMALVDAAHRLGLGVFLDVVYNHFGPSGNYLSSYAPSYFTDRFSSAWGMGLDYAEPHMRRYVTGNARMWLRDYHFDGLRLDATPYMTDDSETHILTELAQEIHELGGTHLLLAEDHRNLPDLVTVNHLDGIWTDDFHHETRVTLTGEQEGYYAGYRGGAEALAYTIRRGWRYEGQFWAVKGEEHERGHPSDALEAPNFVYCIQNHDQIGNRPLGERLHQSDGVTLHEYRGAAALLLPMTPLLFQGQEWAASTPFQFFSDHAGELGQAVSEGRKKEFGGFSGFSGEDVPDPQAEQTFLNSKLNWAEREGGEHARTLRLYRDLLRLRREDPVLHNRQRENLTTGHDGDVLWVRTVTGAGERVLLWNLGQDTRAVAEVKLPFTVPRRLLLHTEGREDLTLGAGEAVLVG.

The disordered stretch occupies residues 1–34 (MTQTQPVTPTPPASFQTQHDPRTRLGATPLPGGA). 273-278 (RLDATP) contacts substrate. Asp275 acts as the Nucleophile in catalysis. Glu308 functions as the Proton donor in the catalytic mechanism. Substrate contacts are provided by residues 328-332 (DDFHH), Glu376, and 399-404 (HDQIGN).

The protein belongs to the glycosyl hydrolase 13 family. Monomer.

The protein localises to the cytoplasm. It catalyses the reaction hydrolysis of (1-&gt;4)-alpha-D-glucosidic linkage in 4-alpha-D-[(1-&gt;4)-alpha-D-glucanosyl]n trehalose to yield trehalose and (1-&gt;4)-alpha-D-glucan.. The protein operates within glycan biosynthesis; trehalose biosynthesis. This chain is Malto-oligosyltrehalose trehalohydrolase (treZ), found in Deinococcus radiodurans (strain ATCC 13939 / DSM 20539 / JCM 16871 / CCUG 27074 / LMG 4051 / NBRC 15346 / NCIMB 9279 / VKM B-1422 / R1).